The chain runs to 137 residues: MFKEFKEFALKGNLVDLAVGFILGGAFGTIVTSLVNDIMMPPLGMLMGGVDFADLFISLNGTEYVSLVAATEAGAPVIAYGKFINAVISFVIMALALFFVIKGMNTLKKKEEAAPPPAPPRQEVLLEEIRNLLAKNQ.

Helical transmembrane passes span 15–35 and 81–101; these read VDLA…TSLV and GKFI…FFVI.

The protein belongs to the MscL family. As to quaternary structure, homopentamer.

Its subcellular location is the cell inner membrane. In terms of biological role, channel that opens in response to stretch forces in the membrane lipid bilayer. May participate in the regulation of osmotic pressure changes within the cell. This is Large-conductance mechanosensitive channel from Hyphomonas neptunium (strain ATCC 15444).